The following is a 1028-amino-acid chain: Contactin-6 (1028 aa).

The first 19 residues, 1–19 (MRLLWKLVILLPLINSCAG), serve as a signal peptide directing secretion. 6 consecutive Ig-like C2-type domains span residues 32-117 (PQDV…AKLQ), 122-208 (EDFE…RSVQ), 227-308 (PKIE…RNLA), 318-402 (PEWE…AELR), 408-495 (PDFS…GSLI), and 499-587 (RTVI…ERLS). 6 disulfides stabilise this stretch: C50–C100, C144–C196, C249–C297, C339–C386, C431–C479, and C521–C577. N65 and N193 each carry an N-linked (GlcNAc...) asparagine glycan. N368, N377, and N468 each carry an N-linked (GlcNAc...) asparagine glycan. 4 Fibronectin type-III domains span residues 600–698 (PPED…TKAS), 703–800 (APVN…SGED), 805–901 (APRG…TKKS), and 902–996 (PPSQ…KMSS). N-linked (GlcNAc...) asparagine glycosylation is found at N659, N765, N860, and N865. Y882 is subject to Phosphotyrosine. The segment covering 887–902 (TGPSSPPVNVTTKKSP) has biased composition (polar residues). Positions 887 to 908 (TGPSSPPVNVTTKKSPPSQPPA) are disordered. 4 N-linked (GlcNAc...) asparagine glycosylation sites follow: N895, N931, N956, and N957. A lipid anchor (GPI-anchor amidated serine) is attached at S999. Residues 1000-1028 (VGVQILKPSTQFLTMVGFFYCFVIQPLSR) constitute a propeptide, removed in mature form.

It belongs to the immunoglobulin superfamily. Contactin family. In terms of assembly, interacts with PTPRG. Specifically expressed in neuronal cells. In brain, it is expressed in spinal cord, cerebrum and cerebellum. At 17 dpc, it is expressed in hippocampus, cerebellum, and the brain stem. Strongly expressed after birth with a maximum level between P1 and P21, which corresponds to the time frame of oligodendrogliogenesis.

The protein resides in the cell membrane. In terms of biological role, contactins mediate cell surface interactions during nervous system development. Participates in oligodendrocytes generation by acting as a ligand of NOTCH1. Its association with NOTCH1 promotes NOTCH1 activation through the released notch intracellular domain (NICD) and subsequent translocation to the nucleus. May be involved in motor coordination. This chain is Contactin-6 (Cntn6), found in Rattus norvegicus (Rat).